A 276-amino-acid chain; its full sequence is Ribosomal RNA small subunit methyltransferase I (276 aa).

The protein belongs to the methyltransferase superfamily. RsmI family.

Its subcellular location is the cytoplasm. The catalysed reaction is cytidine(1402) in 16S rRNA + S-adenosyl-L-methionine = 2'-O-methylcytidine(1402) in 16S rRNA + S-adenosyl-L-homocysteine + H(+). In terms of biological role, catalyzes the 2'-O-methylation of the ribose of cytidine 1402 (C1402) in 16S rRNA. The protein is Ribosomal RNA small subunit methyltransferase I of Mycoplasma pneumoniae (strain ATCC 29342 / M129 / Subtype 1) (Mycoplasmoides pneumoniae).